Consider the following 134-residue polypeptide: Small ribosomal subunit protein uS8c (134 aa).

This sequence belongs to the universal ribosomal protein uS8 family. Part of the 30S ribosomal subunit.

The protein localises to the plastid. The protein resides in the chloroplast. Functionally, one of the primary rRNA binding proteins, it binds directly to 16S rRNA central domain where it helps coordinate assembly of the platform of the 30S subunit. The chain is Small ribosomal subunit protein uS8c (rps8) from Daucus carota (Wild carrot).